The sequence spans 89 residues: Small ribosomal subunit protein uS15 (89 aa).

Belongs to the universal ribosomal protein uS15 family. In terms of assembly, part of the 30S ribosomal subunit. Forms a bridge to the 50S subunit in the 70S ribosome, contacting the 23S rRNA.

Functionally, one of the primary rRNA binding proteins, it binds directly to 16S rRNA where it helps nucleate assembly of the platform of the 30S subunit by binding and bridging several RNA helices of the 16S rRNA. Forms an intersubunit bridge (bridge B4) with the 23S rRNA of the 50S subunit in the ribosome. The sequence is that of Small ribosomal subunit protein uS15 from Lysinibacillus sphaericus (strain C3-41).